The chain runs to 507 residues: Xaa-Pro aminopeptidase 3 (507 aa).

The transit peptide at 1-31 (MPWLLSAPKLVPAVANVRGLSGCMLCSQRRY) directs the protein to the mitochondrion. The interaction with TNFRSF1B stretch occupies residues 54 to 79 (HPHLLRPGEVTPGLSQVEYALRRHKL). Tyrosine 300, aspartate 331, aspartate 342, histidine 424, histidine 431, glutamate 451, and glutamate 475 together coordinate substrate. Mn(2+) contacts are provided by aspartate 331, aspartate 342, and histidine 424. 2 residues coordinate Mn(2+): glutamate 451 and glutamate 475.

It belongs to the peptidase M24B family. Homodimer. Isoform 1 interacts with TNFRSF1B/TNFR2 (activated) and TRAF2. It depends on Mn(2+) as a cofactor. As to expression, isoform 1 and isoform 2 are widely expressed, with isoform 1 being more abundant.

Its subcellular location is the mitochondrion. It localises to the cytoplasm. It carries out the reaction Release of any N-terminal amino acid, including proline, that is linked to proline, even from a dipeptide or tripeptide.. Its function is as follows. Catalyzes the removal of a penultimate prolyl residue from the N-termini of peptides, such as Leu-Pro-Ala. Also shows low activity towards peptides with Ala or Ser at the P1 position. Promotes TNFRSF1B-mediated phosphorylation of MAPK8/JNK1 and MAPK9/JNK2, suggesting a function as an adapter protein for TNFRSF1B; the effect is independent of XPNPEP3 peptidase activity. May inhibit apoptotic cell death induced via TNF-TNFRSF1B signaling. In Homo sapiens (Human), this protein is Xaa-Pro aminopeptidase 3 (XPNPEP3).